We begin with the raw amino-acid sequence, 237 residues long: Uridylate kinase (237 aa).

9 to 12 (KLSG) contacts ATP. Residues 17 to 22 (GTQGYG) form an involved in allosteric activation by GTP region. Residue G51 coordinates UMP. G52 and R56 together coordinate ATP. UMP is bound by residues D71 and 132–139 (CGNPFFTT). ATP-binding residues include T159, Y165, and D168.

It belongs to the UMP kinase family. As to quaternary structure, homohexamer.

It is found in the cytoplasm. The catalysed reaction is UMP + ATP = UDP + ADP. The protein operates within pyrimidine metabolism; CTP biosynthesis via de novo pathway; UDP from UMP (UMPK route): step 1/1. With respect to regulation, allosterically activated by GTP. Inhibited by UTP. Catalyzes the reversible phosphorylation of UMP to UDP. This Parasynechococcus marenigrum (strain WH8102) protein is Uridylate kinase.